The sequence spans 448 residues: Phosphoglucosamine mutase (448 aa).

The active-site Phosphoserine intermediate is the Ser-100. Positions 100, 240, 242, and 244 each coordinate Mg(2+). Residue Ser-100 is modified to Phosphoserine.

This sequence belongs to the phosphohexose mutase family. As to quaternary structure, homodimer, may form a complex with CdaA. It depends on Mg(2+) as a cofactor. Activated by phosphorylation.

The catalysed reaction is alpha-D-glucosamine 1-phosphate = D-glucosamine 6-phosphate. Its function is as follows. Catalyzes the conversion of glucosamine-6-phosphate to glucosamine-1-phosphate. Glucosamine-1-phosphate is used for cell wall biosynthesis. The polypeptide is Phosphoglucosamine mutase (Bacillus subtilis (strain 168)).